Here is a 114-residue protein sequence, read N- to C-terminus: Large ribosomal subunit protein bL20c (114 aa).

It belongs to the bacterial ribosomal protein bL20 family.

The protein resides in the plastid. It localises to the chloroplast. Functionally, binds directly to 23S ribosomal RNA and is necessary for the in vitro assembly process of the 50S ribosomal subunit. It is not involved in the protein synthesizing functions of that subunit. The chain is Large ribosomal subunit protein bL20c from Psilotum nudum (Whisk fern).